The following is a 164-amino-acid chain: Anterior gradient protein 2-B (164 aa).

Positions 1–20 (MESVLKSLFVLLVATSFTLA) are cleaved as a signal peptide. 2 short sequence motifs (homodimer stabilization; interchain) span residues 34-43 (SRGWGDNLEW) and 49-56 (EGLYKAKA).

This sequence belongs to the AGR family. In terms of assembly, monomer and homodimer.

It is found in the secreted. It localises to the endoplasmic reticulum. The sequence is that of Anterior gradient protein 2-B (agr2-b) from Xenopus laevis (African clawed frog).